We begin with the raw amino-acid sequence, 189 residues long: Holliday junction branch migration complex subunit RuvA (189 aa).

The tract at residues 1-62 is domain I; sequence MIVALKGNIE…EEAWSLYGFA (62 aa). The domain II stretch occupies residues 63–138; the sequence is EEAEKRVFDT…FSLSLQEGSK (76 aa). The tract at residues 138-139 is flexible linker; the sequence is KA. The segment at 140–189 is domain III; that stretch reads STPPVFEESRLALESLGFKSELIAKALQNIQATTTQEIIKEALKKLQTLR.

It belongs to the RuvA family. Homotetramer. Forms an RuvA(8)-RuvB(12)-Holliday junction (HJ) complex. HJ DNA is sandwiched between 2 RuvA tetramers; dsDNA enters through RuvA and exits via RuvB. An RuvB hexamer assembles on each DNA strand where it exits the tetramer. Each RuvB hexamer is contacted by two RuvA subunits (via domain III) on 2 adjacent RuvB subunits; this complex drives branch migration. In the full resolvosome a probable DNA-RuvA(4)-RuvB(12)-RuvC(2) complex forms which resolves the HJ.

The protein localises to the cytoplasm. The RuvA-RuvB-RuvC complex processes Holliday junction (HJ) DNA during genetic recombination and DNA repair, while the RuvA-RuvB complex plays an important role in the rescue of blocked DNA replication forks via replication fork reversal (RFR). RuvA specifically binds to HJ cruciform DNA, conferring on it an open structure. The RuvB hexamer acts as an ATP-dependent pump, pulling dsDNA into and through the RuvAB complex. HJ branch migration allows RuvC to scan DNA until it finds its consensus sequence, where it cleaves and resolves the cruciform DNA. This Wolinella succinogenes (strain ATCC 29543 / DSM 1740 / CCUG 13145 / JCM 31913 / LMG 7466 / NCTC 11488 / FDC 602W) (Vibrio succinogenes) protein is Holliday junction branch migration complex subunit RuvA.